We begin with the raw amino-acid sequence, 253 residues long: Indole-3-glycerol phosphate synthase (253 aa).

It belongs to the TrpC family.

It catalyses the reaction 1-(2-carboxyphenylamino)-1-deoxy-D-ribulose 5-phosphate + H(+) = (1S,2R)-1-C-(indol-3-yl)glycerol 3-phosphate + CO2 + H2O. It participates in amino-acid biosynthesis; L-tryptophan biosynthesis; L-tryptophan from chorismate: step 4/5. This chain is Indole-3-glycerol phosphate synthase, found in Petrotoga mobilis (strain DSM 10674 / SJ95).